Reading from the N-terminus, the 1388-residue chain is Rho-associated protein kinase 2 (1388 aa).

The segment at 1 to 27 (MSRPPPTGKMPGAPETAPGDGAGASRQ) is disordered. Positions 92–354 (YDVVKVIGRG…VEEIRQHPFF (263 aa)) constitute a Protein kinase domain. ATP contacts are provided by residues 98 to 106 (IGRGAFGEV) and Lys-121. Residue Asp-214 is the Proton acceptor of the active site. The 69-residue stretch at 357–425 (DQWHWDNIRE…YRENLLLSDS (69 aa)) folds into the AGC-kinase C-terminal domain. The segment at 363 to 784 (NIRETAAPVV…INELLKQKDV (422 aa)) is interaction with PPP1R12A. The interval 373 to 420 (PELSSDIDSSNFDDIEDDKGDVETFPIPKAFVGNQLPFIGFTYYRENL) is interaction with NPM1. Thr-414 carries the post-translational modification Phosphothreonine; by ROCK2. Coiled-coil stretches lie at residues 429-1024 (RETD…EKQL) and 1053-1131 (DTDV…IGLD). In terms of domain architecture, REM-1 spans 497–573 (ALRQLEREKA…LDETNALLRT (77 aa)). Tyr-722 carries the post-translational modification Phosphotyrosine; by SRC. The RhoBD domain maps to 979-1047 (TSDVANLANE…LAEIMNRKEP (69 aa)). The RHOA binding stretch occupies residues 979-1047 (TSDVANLANE…LAEIMNRKEP (69 aa)). The residue at position 1137 (Ser-1137) is a Phosphoserine. The 200-residue stretch at 1150–1349 (ESRLEGWLSL…WVSRLVKKIP (200 aa)) folds into the PH domain. A Phosphothreonine modification is found at Thr-1212. A Phorbol-ester/DAG-type zinc finger spans residues 1260–1315 (GHEFIPTLYHFPTNCEACMKPLWHMFKPPPALECRRCHIKCHKDHMDKKEEIIAPC). A disordered region spans residues 1345–1388 (VKKIPKKPPAPDPFARSSPRTSMKIQQNQSIRRPSRQLAPNKPS). A phosphoserine mark is found at Ser-1362 and Ser-1374. A compositionally biased stretch (polar residues) spans 1362–1376 (SPRTSMKIQQNQSIR).

It belongs to the protein kinase superfamily. AGC Ser/Thr protein kinase family. As to quaternary structure, homodimer. Interacts with IRS1. Interacts with RAF1. Interacts with RHOA (activated by GTP), RHOB and RHOC. Interacts with PPP1R12A. Interacts with EP300. Interacts with CHORDC1. Interacts with BRCA2. Interacts with NPM1; this interaction enhances ROCK2 activity. Interacts with SORL1. Interacts with PJVK. Requires Mg(2+) as cofactor. Phosphorylation at Tyr-722 reduces its binding to RHOA and is crucial for focal adhesion dynamics. Dephosphorylation by PTPN11 stimulates its RHOA binding activity. In terms of processing, cleaved by granzyme B during apoptosis. This leads to constitutive activation of the kinase and membrane blebbing. In terms of tissue distribution, expressed in the brain (at protein level).

It is found in the cytoplasm. The protein localises to the cell membrane. Its subcellular location is the nucleus. The protein resides in the cytoskeleton. It localises to the microtubule organizing center. It is found in the centrosome. The catalysed reaction is L-seryl-[protein] + ATP = O-phospho-L-seryl-[protein] + ADP + H(+). It catalyses the reaction L-threonyl-[protein] + ATP = O-phospho-L-threonyl-[protein] + ADP + H(+). Its activity is regulated as follows. Activated by RHOA binding. Inhibited by Y-27632. Protein kinase which is a key regulator of actin cytoskeleton and cell polarity. Involved in regulation of smooth muscle contraction, actin cytoskeleton organization, stress fiber and focal adhesion formation, neurite retraction, cell adhesion and motility via phosphorylation of ADD1, BRCA2, CNN1, EZR, DPYSL2, EP300, MSN, MYL9/MLC2, NPM1, RDX, PPP1R12A and VIM. Phosphorylates SORL1 and IRF4. Acts as a negative regulator of VEGF-induced angiogenic endothelial cell activation. Positively regulates the activation of p42/MAPK1-p44/MAPK3 and of p90RSK/RPS6KA1 during myogenic differentiation. Plays an important role in the timely initiation of centrosome duplication. Inhibits keratinocyte terminal differentiation. May regulate closure of the eyelids and ventral body wall through organization of actomyosin bundles. Plays a critical role in the regulation of spine and synaptic properties in the hippocampus. Plays an important role in generating the circadian rhythm of the aortic myofilament Ca(2+) sensitivity and vascular contractility by modulating the myosin light chain phosphorylation. The protein is Rho-associated protein kinase 2 (ROCK2) of Homo sapiens (Human).